A 439-amino-acid polypeptide reads, in one-letter code: RNA polymerase II-associated protein RBA50 (439 aa).

Disordered stretches follow at residues 1–35 and 49–79; these read MDLLGDIVEKDTSDSVESNDNGTLSTNNCGTGFPE and LREKRAQKKKTSGKDAEKQQTSTDAPLSEAK. The span at 15–30 shows a compositional bias: polar residues; it reads SVESNDNGTLSTNNCG.

This sequence belongs to the RPAP1 family.

The protein resides in the cytoplasm. Forms an interface between the RNA polymerase II enzyme and chaperone/scaffolding proteins, suggesting that it is required to connect RNA polymerase II to regulators of protein complex formation. The sequence is that of RNA polymerase II-associated protein RBA50 (RBA50) from Saccharomyces cerevisiae (strain ATCC 204508 / S288c) (Baker's yeast).